Reading from the N-terminus, the 66-residue chain is Toxin BomPI (66 aa).

Positions 2-64 (RDAYIAQPEN…VPIRIEGKCH (63 aa)) constitute an LCN-type CS-alpha/beta domain. Cystine bridges form between cysteine 12–cysteine 63, cysteine 16–cysteine 36, cysteine 22–cysteine 46, and cysteine 26–cysteine 48.

It belongs to the long (4 C-C) scorpion toxin superfamily. Sodium channel inhibitor family. Alpha subfamily. As to expression, expressed by the venom gland.

The protein resides in the secreted. Its function is as follows. Alpha toxins bind voltage-independently at site-3 of sodium channels (Nav) and inhibit the inactivation of the activated channels, thereby blocking neuronal transmission. This is Toxin BomPI from Buthus occitanus mardochei (Moroccan scorpion).